The chain runs to 208 residues: Uracil phosphoribosyltransferase (208 aa).

Residues Arg78, Arg103, and 130–138 each bind 5-phospho-alpha-D-ribose 1-diphosphate; that span reads DPMLATGGS. Uracil contacts are provided by residues Ile193 and 198–200; that span reads GDA. 5-phospho-alpha-D-ribose 1-diphosphate is bound at residue Asp199.

It belongs to the UPRTase family. It depends on Mg(2+) as a cofactor.

The enzyme catalyses UMP + diphosphate = 5-phospho-alpha-D-ribose 1-diphosphate + uracil. Its pathway is pyrimidine metabolism; UMP biosynthesis via salvage pathway; UMP from uracil: step 1/1. With respect to regulation, allosterically activated by GTP. Its function is as follows. Catalyzes the conversion of uracil and 5-phospho-alpha-D-ribose 1-diphosphate (PRPP) to UMP and diphosphate. This is Uracil phosphoribosyltransferase from Actinobacillus succinogenes (strain ATCC 55618 / DSM 22257 / CCUG 43843 / 130Z).